Reading from the N-terminus, the 213-residue chain is Lactobacillus shifted protein (213 aa).

Positions P28–N38 are enriched in polar residues. Disordered stretches follow at residues P28–P56 and P182–R213.

The protein is Lactobacillus shifted protein (lbsA) of Emericella nidulans (strain FGSC A4 / ATCC 38163 / CBS 112.46 / NRRL 194 / M139) (Aspergillus nidulans).